The following is a 166-amino-acid chain: MVDVQAQRKQIEKLISLNRVTKVVKGGRRFSFAAFMVVGDGEGYVGWGFGKANDASDAIKKSLTSARKNLRFVPIRKGTLPHEVIGCFKKAKVLIKPATHGTGVIAGGPVRAVMEALGVHDILSKSLGSNNSMNVVKATFKAFDLVLNAEKVAEMRGKKTLKTLWG.

The 64-residue stretch at 10–73 (QIEKLISLNR…TSARKNLRFV (64 aa)) folds into the S5 DRBM domain.

This sequence belongs to the universal ribosomal protein uS5 family. In terms of assembly, part of the 30S ribosomal subunit. Contacts proteins S4 and S8.

With S4 and S12 plays an important role in translational accuracy. Functionally, located at the back of the 30S subunit body where it stabilizes the conformation of the head with respect to the body. This chain is Small ribosomal subunit protein uS5, found in Borrelia garinii subsp. bavariensis (strain ATCC BAA-2496 / DSM 23469 / PBi) (Borreliella bavariensis).